A 340-amino-acid polypeptide reads, in one-letter code: Photosystem II protein D1 (340 aa).

A run of 3 helical transmembrane segments spans residues 25-42 (YIGWFGLLVFPLLSLATV), 114-129 (HFFLGVCGWMGREWEF), and 138-152 (WIFVAFSAPIAAAAA). Position 114 (H114) interacts with chlorophyll a. A pheophytin a-binding site is contributed by W122. 2 residues coordinate [CaMn4O5] cluster: D166 and E185. Residues 193–214 (FHILGVAGVFGGSLFSAMHGSL) traverse the membrane as a helical segment. H194 is a chlorophyll a binding site. Residues H211 and 260 to 261 (SF) contribute to the a quinone site. H211 serves as a coordination point for Fe cation. Residue H268 participates in Fe cation binding. Residues 270-284 (FLAAWPVIGIWFTSL) form a helical membrane-spanning segment. H328, E329, D338, and A340 together coordinate [CaMn4O5] cluster.

Belongs to the reaction center PufL/M/PsbA/D family. PSII is composed of 1 copy each of membrane proteins PsbA, PsbB, PsbC, PsbD, PsbE, PsbF, PsbH, PsbI, PsbJ, PsbK, PsbL, PsbM, PsbT, PsbX, PsbY, PsbZ, Psb30/Ycf12, at least 3 peripheral proteins of the oxygen-evolving complex and a large number of cofactors. It forms dimeric complexes. It depends on The D1/D2 heterodimer binds P680, chlorophylls that are the primary electron donor of PSII, and subsequent electron acceptors. It shares a non-heme iron and each subunit binds pheophytin, quinone, additional chlorophylls, carotenoids and lipids. D1 provides most of the ligands for the Mn4-Ca-O5 cluster of the oxygen-evolving complex (OEC). There is also a Cl(-1) ion associated with D1 and D2, which is required for oxygen evolution. The PSII complex binds additional chlorophylls, carotenoids and specific lipids. as a cofactor. Tyr-157 forms a radical intermediate that is referred to as redox-active TyrZ, YZ or Y-Z.

It localises to the plastid. Its subcellular location is the chloroplast thylakoid membrane. The catalysed reaction is 2 a plastoquinone + 4 hnu + 2 H2O = 2 a plastoquinol + O2. Functionally, photosystem II (PSII) is a light-driven water:plastoquinone oxidoreductase that uses light energy to abstract electrons from H(2)O, generating O(2) and a proton gradient subsequently used for ATP formation. It consists of a core antenna complex that captures photons, and an electron transfer chain that converts photonic excitation into a charge separation. The D1/D2 (PsbA/PsbD) reaction center heterodimer binds P680, the primary electron donor of PSII as well as several subsequent electron acceptors. The polypeptide is Photosystem II protein D1 (Amphidinium operculatum (Dinoflagellate)).